A 360-amino-acid chain; its full sequence is MRKLKKFFKNPSIFIRDHLNKKYPIVRNEISCSENEEYILMRHDLALESQINIDFPIDVVFTWVNDADPKWQERYQKYKQSVDTEHVGRHALDSARFSNHDELKYSLGCVLKFLPWIRRIYIVTDKQCPNWLTPNDKIRVIDHSEMIEKQYLPTFNSHVIEAHLHKIPDLAEHFIYFNDDVFVARPLPAGHFFRSNGIASLFMSKKSLSTMQAKGTDTPTLSASLKSASLLNHDFSFLIDHPLVHTYVPLRKSMFEECWRLYRADIKRFLPNRFRTNNDLNLATFFIPWLSYIRGVAVPSRDICYYFNARSPAAANYFNALLLAKKNGTLPHSFCANDFNTKNVNPRNNVANLLSNYFSE.

Belongs to the stealth family.

Part of a group II capsule biosynthesis locus. In Aeromonas hydrophila, this protein is Capsular polysaccharide phosphotransferase LcbA (lcbA).